A 320-amino-acid polypeptide reads, in one-letter code: Apolipoprotein E (320 aa).

An N-terminal signal peptide occupies residues 1–18 (MKVLWAALLVAFLAGCQG). 8 consecutive repeat copies span residues 82-103 (ALME…EQLS), 104-125 (PVAE…ARLG), 126-147 (ADME…AMLG), 148-169 (QSTD…KRLL), 170-191 (RDVD…EGAE), 192-213 (RGVS…ARAA), 214-236 (TVGS…ERLR), and 237-258 (ARME…EQVE). The 8 X 22 AA approximate tandem repeats stretch occupies residues 82–258 (ALMEETMKEL…RLDEVKEQVE (177 aa)). M145 is subject to Methionine sulfoxide. S149 is modified (phosphoserine). Positions 160–170 (HLRKLRKRLLR) are LDL and other lipoprotein receptors binding. Residue 164–167 (LRKR) participates in heparin binding. The interval 212–293 (AATVGSSLAS…SWFEPLVEDM (82 aa)) is lipid-binding and lipoprotein association. An O-linked (GalNAc...) threonine glycan is attached at T214. 232-239 (GERLRARM) contributes to the heparin binding site. A homooligomerization region spans residues 269 to 320 (QQMRLQAEAFQARLKSWFEPLVEDMQRQWAGLVEKVQAAVGASTTPVPSDNH). Positions 281-293 (RLKSWFEPLVEDM) are specificity for association with VLDL.

Belongs to the apolipoprotein A1/A4/E family. In terms of assembly, homotetramer. May interact with ABCA1; functionally associated with ABCA1 in the biogenesis of HDLs. May interact with APP/A4 amyloid-beta peptide; the interaction is extremely stable in vitro but its physiological significance is unclear. May interact with MAPT. May interact with MAP2. In the cerebrospinal fluid, interacts with secreted SORL1. Interacts with PMEL; this allows the loading of PMEL luminal fragment on ILVs to induce fibril nucleation. APOE exists as multiple glycosylated and sialylated glycoforms within cells and in plasma. The extent of glycosylation and sialylation are tissue and context specific. Post-translationally, glycated in plasma VLDL. In terms of processing, phosphorylated by FAM20C in the extracellular medium.

The protein localises to the secreted. It localises to the extracellular space. The protein resides in the extracellular matrix. Its subcellular location is the extracellular vesicle. It is found in the endosome. The protein localises to the multivesicular body. APOE is an apolipoprotein, a protein associating with lipid particles, that mainly functions in lipoprotein-mediated lipid transport between organs via the plasma and interstitial fluids. APOE is a core component of plasma lipoproteins and is involved in their production, conversion and clearance. Apolipoproteins are amphipathic molecules that interact both with lipids of the lipoprotein particle core and the aqueous environment of the plasma. As such, APOE associates with chylomicrons, chylomicron remnants, very low density lipoproteins (VLDL) and intermediate density lipoproteins (IDL) but shows a preferential binding to high-density lipoproteins (HDL). It also binds a wide range of cellular receptors including the LDL receptor/LDLR, the LDL receptor-related proteins LRP1, LRP2 and LRP8 and the very low-density lipoprotein receptor/VLDLR that mediate the cellular uptake of the APOE-containing lipoprotein particles. Finally, APOE also has a heparin-binding activity and binds heparan-sulfate proteoglycans on the surface of cells, a property that supports the capture and the receptor-mediated uptake of APOE-containing lipoproteins by cells. A main function of APOE is to mediate lipoprotein clearance through the uptake of chylomicrons, VLDLs, and HDLs by hepatocytes. APOE is also involved in the biosynthesis by the liver of VLDLs as well as their uptake by peripheral tissues ensuring the delivery of triglycerides and energy storage in muscle, heart and adipose tissues. By participating in the lipoprotein-mediated distribution of lipids among tissues, APOE plays a critical role in plasma and tissues lipid homeostasis. APOE is also involved in two steps of reverse cholesterol transport, the HDLs-mediated transport of cholesterol from peripheral tissues to the liver, and thereby plays an important role in cholesterol homeostasis. First, it is functionally associated with ABCA1 in the biogenesis of HDLs in tissues. Second, it is enriched in circulating HDLs and mediates their uptake by hepatocytes. APOE also plays an important role in lipid transport in the central nervous system, regulating neuron survival and sprouting. In Cebus capucinus (White-faced sapajou), this protein is Apolipoprotein E (APOE).